We begin with the raw amino-acid sequence, 161 residues long: Protein-export protein SecB (161 aa).

It belongs to the SecB family. As to quaternary structure, homotetramer, a dimer of dimers. One homotetramer interacts with 1 SecA dimer.

The protein localises to the cytoplasm. One of the proteins required for the normal export of preproteins out of the cell cytoplasm. It is a molecular chaperone that binds to a subset of precursor proteins, maintaining them in a translocation-competent state. It also specifically binds to its receptor SecA. The protein is Protein-export protein SecB of Bradyrhizobium diazoefficiens (strain JCM 10833 / BCRC 13528 / IAM 13628 / NBRC 14792 / USDA 110).